The primary structure comprises 770 residues: 1,4-alpha-glucan branching enzyme GlgB (770 aa).

Catalysis depends on Asp-437, which acts as the Nucleophile. Residue Glu-488 is the Proton donor of the active site.

It belongs to the glycosyl hydrolase 13 family. GlgB subfamily. In terms of assembly, monomer.

The catalysed reaction is Transfers a segment of a (1-&gt;4)-alpha-D-glucan chain to a primary hydroxy group in a similar glucan chain.. The protein operates within glycan biosynthesis; glycogen biosynthesis. Its function is as follows. Catalyzes the formation of the alpha-1,6-glucosidic linkages in glycogen by scission of a 1,4-alpha-linked oligosaccharide from growing alpha-1,4-glucan chains and the subsequent attachment of the oligosaccharide to the alpha-1,6 position. In Synechococcus sp. (strain JA-3-3Ab) (Cyanobacteria bacterium Yellowstone A-Prime), this protein is 1,4-alpha-glucan branching enzyme GlgB.